We begin with the raw amino-acid sequence, 181 residues long: ATP synthase subunit delta (181 aa).

It belongs to the ATPase delta chain family. As to quaternary structure, F-type ATPases have 2 components, F(1) - the catalytic core - and F(0) - the membrane proton channel. F(1) has five subunits: alpha(3), beta(3), gamma(1), delta(1), epsilon(1). F(0) has three main subunits: a(1), b(2) and c(10-14). The alpha and beta chains form an alternating ring which encloses part of the gamma chain. F(1) is attached to F(0) by a central stalk formed by the gamma and epsilon chains, while a peripheral stalk is formed by the delta and b chains.

The protein localises to the cell inner membrane. F(1)F(0) ATP synthase produces ATP from ADP in the presence of a proton or sodium gradient. F-type ATPases consist of two structural domains, F(1) containing the extramembraneous catalytic core and F(0) containing the membrane proton channel, linked together by a central stalk and a peripheral stalk. During catalysis, ATP synthesis in the catalytic domain of F(1) is coupled via a rotary mechanism of the central stalk subunits to proton translocation. In terms of biological role, this protein is part of the stalk that links CF(0) to CF(1). It either transmits conformational changes from CF(0) to CF(1) or is implicated in proton conduction. The chain is ATP synthase subunit delta from Aquifex aeolicus (strain VF5).